The following is a 256-amino-acid chain: Probable hydroxyacylglutathione hydrolase glo2 (256 aa).

Zn(2+) contacts are provided by His-63, His-65, Asp-67, His-68, His-118, and Asp-139. Substrate contacts are provided by residues Arg-148, 178–180 (HEY), and 250–253 (RDMK). His-178 serves as a coordination point for Zn(2+).

This sequence belongs to the metallo-beta-lactamase superfamily. Glyoxalase II family. The cofactor is Zn(2+).

It is found in the cytoplasm. The protein resides in the nucleus. The enzyme catalyses an S-(2-hydroxyacyl)glutathione + H2O = a 2-hydroxy carboxylate + glutathione + H(+). It carries out the reaction (R)-S-lactoylglutathione + H2O = (R)-lactate + glutathione + H(+). Its pathway is secondary metabolite metabolism; methylglyoxal degradation; (R)-lactate from methylglyoxal: step 2/2. In terms of biological role, thiolesterase that catalyzes the hydrolysis of S-D-lactoylglutathione to form glutathione and D-lactic acid. Involved in the metabolism of methylglyoxal, a toxic compound for yeast proliferation, by converting methylglyoxal to lactate via S-D-lactoylglutathione by sequential enzyme reactions catalyzed by glyoxalase I and glyoxalase II. The polypeptide is Probable hydroxyacylglutathione hydrolase glo2 (glo2) (Schizosaccharomyces pombe (strain 972 / ATCC 24843) (Fission yeast)).